The sequence spans 351 residues: Actin maturation protease (351 aa).

Residues 1–19 (MTSPCSPPLKPPISPPKTP) are compositionally biased toward pro residues. The interval 1–70 (MTSPCSPPLK…PPAATGPAPR (70 aa)) is disordered. Residues 36–50 (LDFSALPSPPWSQQT) are compositionally biased toward low complexity. Residues 51–64 (PVPPPLPLPPPPAA) are compositionally biased toward pro residues. Positions 124–244 (SLIQEGPQCG…WAVSAGVLLG (121 aa)) are peptidase C39-like. Cys132 is a catalytic residue. At Ser316 the chain carries Phosphoserine.

Belongs to the ACTMAP family. In terms of assembly, interacts (via N-terminus) with PFN2 isoforms IIa and IIb; the interactions may facilitate efficient cleavage of the acetylated N-terminus of immature actin. Interacts with PFN1.

Its subcellular location is the cytoplasm. The enzyme catalyses N-terminal N(alpha)-acetyl-L-methionyl-L-aspartyl-[protein] + H2O = N-terminal L-aspartyl-[protein] + N-acetyl-L-methionine. It carries out the reaction N-terminal N(alpha)-acetyl-L-methionyl-L-glutamyl-[protein] + H2O = N-terminal L-glutamyl-[protein] + N-acetyl-L-methionine. The catalysed reaction is N-terminal N(alpha)-acetyl-L-cysteinyl-L-aspartyl-[protein] + H2O = N-terminal L-aspartyl-[protein] + N-acetyl-L-cysteine. It catalyses the reaction N-terminal N(alpha)-acetyl-L-cysteinyl-L-glutamyl-[protein] + H2O = N-terminal L-glutamyl-[protein] + N-acetyl-L-cysteine. Its function is as follows. Actin maturation protease that specifically mediates the cleavage of immature acetylated N-terminal actin, thereby contributing to actin maturation. Cleaves N-terminal acetylated methionine of immature cytoplasmic beta- and gamma-actins ACTB and ACTG1 after translation. Cleaves N-terminal acetylated cysteine of muscle alpha-actins ACTA1, ACTC1 and ACTA2 after canonical removal of N-terminal methionine. This chain is Actin maturation protease, found in Homo sapiens (Human).